The primary structure comprises 2259 residues: Protein Ycf2 (2259 aa).

An ATP-binding site is contributed by 1556-1563 (GSQETGRS).

It belongs to the Ycf2 family.

It is found in the plastid. The protein resides in the chloroplast stroma. Probable ATPase of unknown function. Its presence in a non-photosynthetic plant (Epifagus virginiana) and experiments in tobacco indicate that it has an essential function which is probably not related to photosynthesis. In Physcomitrium patens (Spreading-leaved earth moss), this protein is Protein Ycf2.